A 291-amino-acid chain; its full sequence is Small ribosomal subunit protein uS2 (291 aa).

The tract at residues 254–291 is disordered; sequence RTSNRDNKNNKNNNNTDNTDNAASIKEEDLIGGSNNEN. Residues 263 to 277 show a composition bias toward low complexity; sequence NKNNNNTDNTDNAAS.

It belongs to the universal ribosomal protein uS2 family.

The sequence is that of Small ribosomal subunit protein uS2 from Ehrlichia canis (strain Jake).